The primary structure comprises 545 residues: Chaperonin GroEL 2 (545 aa).

Residues 29–32, 86–90, glycine 413, 479–481, and aspartate 495 contribute to the ATP site; these read TLGP, DGTTT, and NAA.

This sequence belongs to the chaperonin (HSP60) family. Forms a cylinder of 14 subunits composed of two heptameric rings stacked back-to-back. Interacts with the co-chaperonin GroES.

The protein localises to the cytoplasm. The enzyme catalyses ATP + H2O + a folded polypeptide = ADP + phosphate + an unfolded polypeptide.. Together with its co-chaperonin GroES, plays an essential role in assisting protein folding. The GroEL-GroES system forms a nano-cage that allows encapsulation of the non-native substrate proteins and provides a physical environment optimized to promote and accelerate protein folding. This chain is Chaperonin GroEL 2, found in Prochlorococcus marinus (strain SARG / CCMP1375 / SS120).